The primary structure comprises 282 residues: D-arabinitol 2-dehydrogenase [ribulose-forming] (282 aa).

2 residues coordinate NADP(+): Leu-32 and Asn-53. Ser-170 acts as the Proton donor in catalysis. NADP(+)-binding residues include Tyr-185, Lys-189, Ile-218, and Thr-220. Tyr-185 serves as the catalytic Proton acceptor. Catalysis depends on Lys-189, which acts as the Lowers pKa of active site Tyr.

It belongs to the short-chain dehydrogenases/reductases (SDR) family.

The catalysed reaction is D-arabinitol + NAD(+) = D-ribulose + NADH + H(+). It participates in carbohydrate metabolism; D-arabinitol metabolism. Catalyzes the NAD(+)-dependent oxidation of D-arabinitol at carbon 4 to produce D-ribulose. The polypeptide is D-arabinitol 2-dehydrogenase [ribulose-forming] (ARD) (Candida tropicalis (Yeast)).